A 156-amino-acid polypeptide reads, in one-letter code: MDINITLIGQMITFAIFVGFTMKFVWPPLRKALEERREKIAEGLASADRASRELEVAKRQSAEILREAKAKATEIIENAYVRAHKVDEQAKEEAIAAADKIKSMAIAEIEQEKVKAKEQLKQELVNLAMAAASKIIAASVDEKASKKVLEDFVEKV.

A helical transmembrane segment spans residues 5–27; it reads ITLIGQMITFAIFVGFTMKFVWP.

This sequence belongs to the ATPase B chain family. In terms of assembly, F-type ATPases have 2 components, F(1) - the catalytic core - and F(0) - the membrane proton channel. F(1) has five subunits: alpha(3), beta(3), gamma(1), delta(1), epsilon(1). F(0) has three main subunits: a(1), b(2) and c(10-14). The alpha and beta chains form an alternating ring which encloses part of the gamma chain. F(1) is attached to F(0) by a central stalk formed by the gamma and epsilon chains, while a peripheral stalk is formed by the delta and b chains.

It is found in the cell inner membrane. F(1)F(0) ATP synthase produces ATP from ADP in the presence of a proton or sodium gradient. F-type ATPases consist of two structural domains, F(1) containing the extramembraneous catalytic core and F(0) containing the membrane proton channel, linked together by a central stalk and a peripheral stalk. During catalysis, ATP synthesis in the catalytic domain of F(1) is coupled via a rotary mechanism of the central stalk subunits to proton translocation. Functionally, component of the F(0) channel, it forms part of the peripheral stalk, linking F(1) to F(0). In Francisella tularensis subsp. tularensis (strain WY96-3418), this protein is ATP synthase subunit b.